The sequence spans 268 residues: Glucosamine-6-phosphate deaminase (268 aa).

Asp-67 serves as the catalytic Proton acceptor; for enolization step. Asn-136 functions as the For ring-opening step in the catalytic mechanism. Catalysis depends on His-138, which acts as the Proton acceptor; for ring-opening step. Glu-143 serves as the catalytic For ring-opening step.

This sequence belongs to the glucosamine/galactosamine-6-phosphate isomerase family. NagB subfamily. In terms of assembly, homohexamer.

It carries out the reaction alpha-D-glucosamine 6-phosphate + H2O = beta-D-fructose 6-phosphate + NH4(+). It participates in amino-sugar metabolism; N-acetylneuraminate degradation; D-fructose 6-phosphate from N-acetylneuraminate: step 5/5. Its function is as follows. Catalyzes the reversible isomerization-deamination of glucosamine 6-phosphate (GlcN6P) to form fructose 6-phosphate (Fru6P) and ammonium ion. The sequence is that of Glucosamine-6-phosphate deaminase from Shewanella loihica (strain ATCC BAA-1088 / PV-4).